A 295-amino-acid polypeptide reads, in one-letter code: Alpha-1A adrenergic receptor (295 aa).

Residues 1–27 (MVFLSGNASDSSNCTHPPAPVNISKAI) are Extracellular-facing. Asn-7, Asn-13, and Asn-22 each carry an N-linked (GlcNAc...) asparagine glycan. Residues 28 to 51 (LLGVILGGLIIFGVLGNILVILSV) form a helical membrane-spanning segment. Over 52–64 (ACHRHLHSVTHYY) the chain is Cytoplasmic. The helical transmembrane segment at 65–88 (IVNLAVADLLLTSTVLPFSAIFEI) threads the bilayer. Residues 89–99 (LGYWAFGRVFC) are Extracellular-facing. A disulfide bond links Cys-99 and Cys-176. The helical transmembrane segment at 100 to 122 (NIWAAVDVLCCTASIMGLCIISI) threads the bilayer. Residues 123-143 (DRYIGVSYPLRYPTIVTQKRG) are Cytoplasmic-facing. Residues 144–167 (LMALLCVWALSLVISIGPLFGWRQ) form a helical membrane-spanning segment. The Extracellular portion of the chain corresponds to 168-181 (PAPEDETICQITEE). The chain crosses the membrane as a helical span at residues 182–205 (PGYVLFSALGSFYVPLTIILVMYC). Residues 206-273 (RVYVVAKRES…FSREKKAAKT (68 aa)) lie on the Cytoplasmic side of the membrane. At Ser-215 the chain carries Phosphoserine; by PKA. Residues 274–295 (LGIVVGCFVLCWLPFFLVMPIG) form a helical membrane-spanning segment.

It belongs to the G-protein coupled receptor 1 family. Adrenergic receptor subfamily. ADRA1A sub-subfamily. As to quaternary structure, homo- and heterooligomer. Heterooligomerizes with ADRA1B homooligomers in cardiac myocytes. Interacts with CAVIN4.

The protein localises to the nucleus membrane. It is found in the cell membrane. The protein resides in the cytoplasm. Its subcellular location is the membrane. It localises to the caveola. Its function is as follows. This alpha-adrenergic receptor mediates its action by association with G proteins that activate a phosphatidylinositol-calcium second messenger system. Its effect is mediated by G(q) and G(11) proteins. Nuclear ADRA1A-ADRA1B heterooligomers regulate phenylephrine (PE)-stimulated ERK signaling in cardiac myocytes. In Canis lupus familiaris (Dog), this protein is Alpha-1A adrenergic receptor (ADRA1A).